The sequence spans 277 residues: MSENDEGTDAAELDEELDELEDELEEDFEEPAAAADEADPTADEPPAEEAADEAADEAEADEPETDAEPADEEPVLDENVMPDDEADLLIPVEDYLAAGVHIGTQQKTKSMDRFIHRVRTDGLYVLDVSQTDQRIRTAASFLSNYQPEQILVASSRQYGRFPAEKFADAVGARARTGRFIPGTLTNPDYDGYIEPDVVVVTDPIGDSQAVKEAITVGIPVIAMCDSNNTTSNVDLVVPTNNKGRKALSVIYWLLANETLDRRGAEPAYALEDFETEP.

The interval 1–78 is disordered; it reads MSENDEGTDA…PADEEPVLDE (78 aa).

Belongs to the universal ribosomal protein uS2 family.

In Natronomonas pharaonis (strain ATCC 35678 / DSM 2160 / CIP 103997 / JCM 8858 / NBRC 14720 / NCIMB 2260 / Gabara) (Halobacterium pharaonis), this protein is Small ribosomal subunit protein uS2.